The sequence spans 57 residues: DNA-directed RNA polymerase subunit Rpo6 (57 aa).

This sequence belongs to the archaeal Rpo6/eukaryotic RPB6 RNA polymerase subunit family. As to quaternary structure, part of the RNA polymerase complex.

The protein resides in the cytoplasm. The enzyme catalyses RNA(n) + a ribonucleoside 5'-triphosphate = RNA(n+1) + diphosphate. In terms of biological role, DNA-dependent RNA polymerase (RNAP) catalyzes the transcription of DNA into RNA using the four ribonucleoside triphosphates as substrates. This chain is DNA-directed RNA polymerase subunit Rpo6, found in Pyrococcus abyssi (strain GE5 / Orsay).